The following is a 473-amino-acid chain: Serine palmitoyltransferase 1 (473 aa).

Residues 1 to 15 (MATVAEQWVLVEMVQ) lie on the Lumenal side of the membrane. The segment at 1–66 (MATVAEQWVL…KEELIEEWQP (66 aa)) is interaction with SPTLC2. Residues 16 to 36 (ALYEAPAYHLILEGILILWII) traverse the membrane as a helical segment. The Cytoplasmic segment spans residues 37–473 (RLVFSKTYKL…IREAAQAVLL (437 aa)). Tyrosine 164 is subject to Phosphotyrosine; by ABL.

The protein belongs to the class-II pyridoxal-phosphate-dependent aminotransferase family. In terms of assembly, component of the serine palmitoyltransferase (SPT) complex, which is also composed of SPTLC2 or SPTLC3 and SPTSSA or SPTSSB. The heterodimer with SPTLC2 or SPTLC3 forms the catalytic core of the enzyme, while SPTSSA or SPTSSB subunits determine substrate specificity. SPT also interacts with ORMDL proteins, especially ORMDL3, which negatively regulate SPT activity in the presence of ceramides. Forms dimers of heterodimers with SPTLC2. Interacts with RTN4 (isoform B). The cofactor is pyridoxal 5'-phosphate. Post-translationally, phosphorylation at Tyr-164 inhibits activity and promotes cell survival. Expressed in astrocytes.

It is found in the endoplasmic reticulum membrane. The enzyme catalyses L-serine + hexadecanoyl-CoA + H(+) = 3-oxosphinganine + CO2 + CoA. It catalyses the reaction octadecanoyl-CoA + L-serine + H(+) = 3-oxoeicosasphinganine + CO2 + CoA. The catalysed reaction is tetradecanoyl-CoA + L-serine + H(+) = 3-oxohexadecasphinganine + CO2 + CoA. It carries out the reaction dodecanoyl-CoA + L-serine + H(+) = 3-oxotetradecasphinganine + CO2 + CoA. The protein operates within lipid metabolism; sphingolipid metabolism. With respect to regulation, SPT complex catalytic activity is negatively regulated by ORMDL proteins, including ORMDL3, in the presence of ceramides. This mechanism allows to maintain ceramide levels at sufficient concentrations for the production of complex sphingolipids, but which prevents the accumulation of ceramides to levels that trigger apoptosis. Its function is as follows. Component of the serine palmitoyltransferase multisubunit enzyme (SPT) that catalyzes the initial and rate-limiting step in sphingolipid biosynthesis by condensing L-serine and activated acyl-CoA (most commonly palmitoyl-CoA) to form long-chain bases. The SPT complex is also composed of SPTLC2 or SPTLC3 and SPTSSA or SPTSSB. Within this complex, the heterodimer with SPTLC2 or SPTLC3 forms the catalytic core. The composition of the serine palmitoyltransferase (SPT) complex determines the substrate preference. The SPTLC1-SPTLC2-SPTSSA complex shows a strong preference for C16-CoA substrate, while the SPTLC1-SPTLC3-SPTSSA isozyme uses both C14-CoA and C16-CoA as substrates, with a slight preference for C14-CoA. The SPTLC1-SPTLC2-SPTSSB complex shows a strong preference for C18-CoA substrate, while the SPTLC1-SPTLC3-SPTSSB isozyme displays an ability to use a broader range of acyl-CoAs, without apparent preference. Required for adipocyte cell viability and metabolic homeostasis. In Rattus norvegicus (Rat), this protein is Serine palmitoyltransferase 1.